A 160-amino-acid polypeptide reads, in one-letter code: Photosystem II extrinsic protein V (160 aa).

An N-terminal signal peptide occupies residues 1–25 (MKRFFLVAIASVLFFFNTMVGSANA). Cys62, Cys65, His66, and His117 together coordinate heme c.

The protein belongs to the cytochrome c family. PsbV subfamily. PSII is composed of 1 copy each of membrane proteins PsbA, PsbB, PsbC, PsbD, PsbE, PsbF, PsbH, PsbI, PsbJ, PsbK, PsbL, PsbM, PsbT, PsbX, PsbY, PsbZ, Psb30/Ycf12, peripheral proteins PsbO, CyanoQ (PsbQ), PsbU, PsbV and a large number of cofactors. It forms dimeric complexes. The cyanobacterial oxygen-evolving complex is composed of PsbO, CyanoQ (PsbQ), PsbV and PsbU. Heme c is required as a cofactor.

Its subcellular location is the cellular thylakoid membrane. In terms of biological role, one of the extrinsic, lumenal subunits of photosystem II (PSII). PSII is a light-driven water plastoquinone oxidoreductase, using light energy to abstract electrons from H(2)O, generating a proton gradient subsequently used for ATP formation. The extrinsic proteins stabilize the structure of photosystem II oxygen-evolving complex (OEC), the ion environment of oxygen evolution and protect the OEC against heat-induced inactivation. Low-potential cytochrome c that plays a role in the OEC of PSII, required for normal function or stabilization of PSII. This is Photosystem II extrinsic protein V from Synechocystis sp. (strain ATCC 27184 / PCC 6803 / Kazusa).